A 385-amino-acid polypeptide reads, in one-letter code: Lipid-A-disaccharide synthase 2 (385 aa).

The protein belongs to the LpxB family.

The enzyme catalyses a lipid X + a UDP-2-N,3-O-bis[(3R)-3-hydroxyacyl]-alpha-D-glucosamine = a lipid A disaccharide + UDP + H(+). Its pathway is bacterial outer membrane biogenesis; LPS lipid A biosynthesis. Its function is as follows. Condensation of UDP-2,3-diacylglucosamine and 2,3-diacylglucosamine-1-phosphate to form lipid A disaccharide, a precursor of lipid A, a phosphorylated glycolipid that anchors the lipopolysaccharide to the outer membrane of the cell. This Legionella pneumophila (strain Lens) protein is Lipid-A-disaccharide synthase 2.